Here is a 240-residue protein sequence, read N- to C-terminus: Dihydromonapterin reductase (240 aa).

Tyr-152 serves as the catalytic Proton acceptor.

The protein belongs to the short-chain dehydrogenases/reductases (SDR) family. FolM subfamily.

The enzyme catalyses (6S)-5,6,7,8-tetrahydrofolate + NADP(+) = 7,8-dihydrofolate + NADPH + H(+). It carries out the reaction 7,8-dihydromonapterin + NADPH + H(+) = 5,6,7,8-tetrahydromonapterin + NADP(+). In terms of biological role, catalyzes the reduction of dihydromonapterin to tetrahydromonapterin. Also has lower activity with dihydrofolate. This chain is Dihydromonapterin reductase (folM), found in Enterobacter sp. (strain 638).